The sequence spans 175 residues: ATP-dependent protease subunit HslV (175 aa).

Threonine 2 is an active-site residue. Positions 159, 162, and 165 each coordinate Na(+).

This sequence belongs to the peptidase T1B family. HslV subfamily. As to quaternary structure, a double ring-shaped homohexamer of HslV is capped on each side by a ring-shaped HslU homohexamer. The assembly of the HslU/HslV complex is dependent on binding of ATP.

Its subcellular location is the cytoplasm. It catalyses the reaction ATP-dependent cleavage of peptide bonds with broad specificity.. Allosterically activated by HslU binding. Its function is as follows. Protease subunit of a proteasome-like degradation complex believed to be a general protein degrading machinery. This chain is ATP-dependent protease subunit HslV, found in Ligilactobacillus salivarius (strain UCC118) (Lactobacillus salivarius).